The following is a 282-amino-acid chain: Pantothenate synthetase (282 aa).

Residue 30–37 (MGNLHEGH) participates in ATP binding. The Proton donor role is filled by histidine 37. Glutamine 61 is a binding site for (R)-pantoate. Glutamine 61 serves as a coordination point for beta-alanine. 148–151 (GQKD) serves as a coordination point for ATP. Glutamine 154 contacts (R)-pantoate. ATP is bound by residues valine 177 and 185-188 (LSSR).

The protein belongs to the pantothenate synthetase family. In terms of assembly, homodimer.

It localises to the cytoplasm. The enzyme catalyses (R)-pantoate + beta-alanine + ATP = (R)-pantothenate + AMP + diphosphate + H(+). Its pathway is cofactor biosynthesis; (R)-pantothenate biosynthesis; (R)-pantothenate from (R)-pantoate and beta-alanine: step 1/1. Functionally, catalyzes the condensation of pantoate with beta-alanine in an ATP-dependent reaction via a pantoyl-adenylate intermediate. In Acinetobacter baumannii (strain AB0057), this protein is Pantothenate synthetase.